Here is a 357-residue protein sequence, read N- to C-terminus: Chorismate synthase (357 aa).

Residue Arg-47 coordinates NADP(+). FMN is bound by residues Arg-123–Ser-125, Gly-281, Lys-296–Ser-300, and Arg-324.

Belongs to the chorismate synthase family. In terms of assembly, homotetramer. FMNH2 serves as cofactor.

The enzyme catalyses 5-O-(1-carboxyvinyl)-3-phosphoshikimate = chorismate + phosphate. The protein operates within metabolic intermediate biosynthesis; chorismate biosynthesis; chorismate from D-erythrose 4-phosphate and phosphoenolpyruvate: step 7/7. In terms of biological role, catalyzes the anti-1,4-elimination of the C-3 phosphate and the C-6 proR hydrogen from 5-enolpyruvylshikimate-3-phosphate (EPSP) to yield chorismate, which is the branch point compound that serves as the starting substrate for the three terminal pathways of aromatic amino acid biosynthesis. This reaction introduces a second double bond into the aromatic ring system. In Chlamydia trachomatis serovar D (strain ATCC VR-885 / DSM 19411 / UW-3/Cx), this protein is Chorismate synthase.